The following is a 309-amino-acid chain: Protein FdhE (309 aa).

Belongs to the FdhE family.

It localises to the cytoplasm. In terms of biological role, necessary for formate dehydrogenase activity. This is Protein FdhE from Salmonella enteritidis PT4 (strain P125109).